The sequence spans 119 residues: MVSKVSVTRRAGRVRRKLKAVATERPRLSVYRSSKHIYAQVIDDVKGHTLAAASSLDKDLREKLKTGADVDAAGVVGKLIAERAKKAGIDKVVFDRGPYIYHGRVKALADAAREGGLEF.

The protein belongs to the universal ribosomal protein uL18 family. Part of the 50S ribosomal subunit; part of the 5S rRNA/L5/L18/L25 subcomplex. Contacts the 5S and 23S rRNAs.

Functionally, this is one of the proteins that bind and probably mediate the attachment of the 5S RNA into the large ribosomal subunit, where it forms part of the central protuberance. This Chelativorans sp. (strain BNC1) protein is Large ribosomal subunit protein uL18.